The chain runs to 326 residues: Serpentine receptor class alpha-12 (326 aa).

Residues 1–17 lie on the Extracellular side of the membrane; it reads MSCASEVQAQLFTHPVQ. The chain crosses the membrane as a helical span at residues 18 to 38; sequence IIYACVQTVLFLATIIGSLLA. Topologically, residues 39–54 are cytoplasmic; it reads IVQLCKKTTIPDSTKV. Residues 55-75 traverse the membrane as a helical segment; it reads LLIGALFFANAHELAYFSSPF. The Extracellular segment spans residues 76-101; it reads KVFKMNLFHTNTSCYPLASTLECIPT. A helical transmembrane segment spans residues 102 to 122; the sequence is TTVLAMGISGNMLIQSALSIF. Over 123-138 the chain is Cytoplasmic; it reads RLLATIFPVCYSRMRA. Residues 139–159 traverse the membrane as a helical segment; that stretch reads LPGVVLLFMVLIPSFLSYSWI. Topologically, residues 160-185 are extracellular; sequence RSDIVLDDYQMFCSQWSANISSRANT. The chain crosses the membrane as a helical span at residues 186–206; sequence YLEYCSYLTVAHIIINALIIL. At 207 to 234 the chain is on the cytoplasmic side; the sequence is RNRSVESKCRFDVQQRYLNSETLKTTQT. The helical transmembrane segment at 235–255 threads the bilayer; it reads ICYLSIAQFLAMFLYSGGVLF. At 256–270 the chain is on the extracellular side; it reads MRKNQKNIPTLIYIN. Residues 271 to 291 traverse the membrane as a helical segment; sequence VIVWVYAPPYACVSLAPLILF. The Cytoplasmic segment spans residues 292–326; that stretch reads SLWNLKKQRQIRIQSITVQKETQEDHIRKLQLSWG.

The protein belongs to the nematode receptor-like protein sra family.

Its subcellular location is the membrane. The chain is Serpentine receptor class alpha-12 from Caenorhabditis briggsae.